The following is a 406-amino-acid chain: LIM/homeobox protein Lhx2 (406 aa).

2 consecutive LIM zinc-binding domains span residues Cys-53–Asp-105 and Cys-115–His-168. A disordered region spans residues Asp-250–Arg-270. The homeobox DNA-binding region spans Thr-266 to Leu-325. The Nuclear localization signal motif lies at Lys-307–Arg-323. Over residues Gln-328–Ala-356 the composition is skewed to polar residues. 2 disordered regions span residues Gln-328–Leu-375 and Gly-387–Phe-406. Over residues Ser-357–Leu-375 the composition is skewed to low complexity. Over residues Ser-396–Phe-406 the composition is skewed to polar residues.

Interacts (via LIM domains) with CITED2. Interacts with POU4F2 isoform 1.

The protein localises to the nucleus. In terms of biological role, acts as a transcriptional activator. Stimulates the promoter of the alpha-glycoprotein gene. Transcriptional regulatory protein involved in the control of cell differentiation in developing lymphoid and neural cell types. In Mus musculus (Mouse), this protein is LIM/homeobox protein Lhx2 (Lhx2).